The chain runs to 633 residues: Glutamyl-tRNA(Gln) amidotransferase subunit E (633 aa).

It belongs to the GatB/GatE family. GatE subfamily. As to quaternary structure, heterodimer of GatD and GatE.

It carries out the reaction L-glutamyl-tRNA(Gln) + L-glutamine + ATP + H2O = L-glutaminyl-tRNA(Gln) + L-glutamate + ADP + phosphate + H(+). Functionally, allows the formation of correctly charged Gln-tRNA(Gln) through the transamidation of misacylated Glu-tRNA(Gln) in organisms which lack glutaminyl-tRNA synthetase. The reaction takes place in the presence of glutamine and ATP through an activated gamma-phospho-Glu-tRNA(Gln). The GatDE system is specific for glutamate and does not act on aspartate. This is Glutamyl-tRNA(Gln) amidotransferase subunit E from Saccharolobus islandicus (strain L.S.2.15 / Lassen #1) (Sulfolobus islandicus).